A 514-amino-acid chain; its full sequence is Tumor necrosis factor receptor superfamily member EDAR (514 aa).

Positions 1 to 27 are cleaved as a signal peptide; sequence MKMWKRRGQKKSMFLSSLLVCCMFASA. Topologically, residues 28–183 are extracellular; sequence EYSSCGEYEF…SPGQGHLATA (156 aa). TNFR-Cys repeat units lie at residues 31–72, 74–114, and 116–149; these read SCGE…GFAC, PCPQ…DAEC, and PCLPGYYMLENRARNLYAMVCHSCQNAPLNTKEC. 7 disulfides stabilise this stretch: Cys-32-Cys-45, Cys-48-Cys-61, Cys-51-Cys-72, Cys-75-Cys-88, Cys-94-Cys-114, Cys-117-Cys-136, and Cys-139-Cys-149. N-linked (GlcNAc...) asparagine glycosylation is found at Asn-39 and Asn-58. The helical transmembrane segment at 184-204 threads the bilayer; that stretch reads LIIAMSTIFIMAIAIVLIIMF. Over 205 to 514 the chain is Cytoplasmic; it reads YILKAKPNGQ…TSPSPRCASV (310 aa). Residues 254–294 are disordered; the sequence is LKASPQKTVKSENDASSENEQLLSRSIDSDEEPTSDKLRSS. The span at 267-279 shows a compositional bias: polar residues; sequence DASSENEQLLSRS. Residues 403 to 476 form the Death domain; sequence RMLSSSYSSD…DAVESLCADV (74 aa).

The protein resides in the membrane. Functionally, receptor for EDA. May mediate the activation of NF-kappa-B and JNK. The sequence is that of Tumor necrosis factor receptor superfamily member EDAR (edar) from Oryzias latipes (Japanese rice fish).